A 291-amino-acid polypeptide reads, in one-letter code: Shikimate dehydrogenase (NADP(+)) (291 aa).

Shikimate contacts are provided by residues 14–16 and T61; that span reads SKS. Catalysis depends on K65, which acts as the Proton acceptor. Residue E77 participates in NADP(+) binding. Residues N86 and D102 each contribute to the shikimate site. NADP(+)-binding positions include 139–143, 164–169, and L232; these read GAGGA and NRTFSR. Y234 serves as a coordination point for shikimate. G256 contacts NADP(+).

This sequence belongs to the shikimate dehydrogenase family. In terms of assembly, homodimer.

It carries out the reaction shikimate + NADP(+) = 3-dehydroshikimate + NADPH + H(+). It participates in metabolic intermediate biosynthesis; chorismate biosynthesis; chorismate from D-erythrose 4-phosphate and phosphoenolpyruvate: step 4/7. In terms of biological role, involved in the biosynthesis of the chorismate, which leads to the biosynthesis of aromatic amino acids. Catalyzes the reversible NADPH linked reduction of 3-dehydroshikimate (DHSA) to yield shikimate (SA). The sequence is that of Shikimate dehydrogenase (NADP(+)) from Blochmanniella pennsylvanica (strain BPEN).